A 119-amino-acid polypeptide reads, in one-letter code: UPF0102 protein Sare_1228 (119 aa).

Belongs to the UPF0102 family.

In Salinispora arenicola (strain CNS-205), this protein is UPF0102 protein Sare_1228.